A 1072-amino-acid polypeptide reads, in one-letter code: Zn(2)-C6 fungal-type transcription factor FTF2 (1072 aa).

The zn(2)-C6 fungal-type DNA-binding region spans 179–206; that stretch reads CIACRRKKIRCSGEKPACKHCLRSRIPC.

It is found in the nucleus. In terms of biological role, zn(2)-C6 fungal-type transcription factor that has a role in conidia production and also in plant colonization. Acts as a negative regulator of the production of macroconidia and is required for full virulence and the positive regulation of SIX effectors. In addition, FTF2 is also involved in the regulation of class II hydrophobins FOXG_02746 and FOXG_02748 likely required for plant colonization. The protein is Zn(2)-C6 fungal-type transcription factor FTF2 of Fusarium oxysporum f. sp. lycopersici (strain 4287 / CBS 123668 / FGSC 9935 / NRRL 34936) (Fusarium vascular wilt of tomato).